Reading from the N-terminus, the 614-residue chain is Methionine--tRNA ligase (614 aa).

The 'HIGH' region motif lies at Pro-11–His-21. Residues Cys-143, Cys-146, Cys-156, and Cys-159 each coordinate Zn(2+). The short motif at Gln-359–Ser-363 is the 'KMSKS' region element. Thr-362 is an ATP binding site.

It belongs to the class-I aminoacyl-tRNA synthetase family. MetG type 1 subfamily. As to quaternary structure, monomer. The cofactor is Zn(2+).

It is found in the cytoplasm. The catalysed reaction is tRNA(Met) + L-methionine + ATP = L-methionyl-tRNA(Met) + AMP + diphosphate. Its function is as follows. Is required not only for elongation of protein synthesis but also for the initiation of all mRNA translation through initiator tRNA(fMet) aminoacylation. The sequence is that of Methionine--tRNA ligase from Beutenbergia cavernae (strain ATCC BAA-8 / DSM 12333 / CCUG 43141 / JCM 11478 / NBRC 16432 / NCIMB 13614 / HKI 0122).